The following is a 158-amino-acid chain: Ribosome maturation factor RimP (158 aa).

The protein belongs to the RimP family.

The protein localises to the cytoplasm. Functionally, required for maturation of 30S ribosomal subunits. This Lactiplantibacillus plantarum (strain ATCC BAA-793 / NCIMB 8826 / WCFS1) (Lactobacillus plantarum) protein is Ribosome maturation factor RimP.